A 91-amino-acid chain; its full sequence is DNA-directed RNA polymerase subunit omega (91 aa).

It belongs to the RNA polymerase subunit omega family. The RNAP catalytic core consists of 2 alpha, 1 beta, 1 beta' and 1 omega subunit. When a sigma factor is associated with the core the holoenzyme is formed, which can initiate transcription.

The enzyme catalyses RNA(n) + a ribonucleoside 5'-triphosphate = RNA(n+1) + diphosphate. Its function is as follows. Promotes RNA polymerase assembly. Latches the N- and C-terminal regions of the beta' subunit thereby facilitating its interaction with the beta and alpha subunits. The protein is DNA-directed RNA polymerase subunit omega of Yersinia pestis bv. Antiqua (strain Antiqua).